The following is a 359-amino-acid chain: Biotin synthase (359 aa).

Residues 47–276 (HHGRRVRIHV…EADLRMAGGR (230 aa)) form the Radical SAM core domain. The [4Fe-4S] cluster site is built by Cys-65, Cys-69, and Cys-72. Residues Cys-109, Cys-141, Cys-201, and Arg-271 each contribute to the [2Fe-2S] cluster site. The segment at 320-359 (EPVIVEDGPERQTPATADDTPSGDPEAADRRRQPSAGPAG) is disordered.

Belongs to the radical SAM superfamily. Biotin synthase family. As to quaternary structure, homodimer. It depends on [4Fe-4S] cluster as a cofactor. [2Fe-2S] cluster serves as cofactor.

It carries out the reaction (4R,5S)-dethiobiotin + (sulfur carrier)-SH + 2 reduced [2Fe-2S]-[ferredoxin] + 2 S-adenosyl-L-methionine = (sulfur carrier)-H + biotin + 2 5'-deoxyadenosine + 2 L-methionine + 2 oxidized [2Fe-2S]-[ferredoxin]. The protein operates within cofactor biosynthesis; biotin biosynthesis; biotin from 7,8-diaminononanoate: step 2/2. In terms of biological role, catalyzes the conversion of dethiobiotin (DTB) to biotin by the insertion of a sulfur atom into dethiobiotin via a radical-based mechanism. This Salinibacter ruber (strain DSM 13855 / M31) protein is Biotin synthase.